A 119-amino-acid polypeptide reads, in one-letter code: Large ribosomal subunit protein bL20 (119 aa).

This sequence belongs to the bacterial ribosomal protein bL20 family.

Functionally, binds directly to 23S ribosomal RNA and is necessary for the in vitro assembly process of the 50S ribosomal subunit. It is not involved in the protein synthesizing functions of that subunit. In Ruthia magnifica subsp. Calyptogena magnifica, this protein is Large ribosomal subunit protein bL20.